We begin with the raw amino-acid sequence, 321 residues long: Serine/threonine-protein phosphatase 4 catalytic subunit 2 (321 aa).

Residues D64, H66, D92, and N124 each coordinate Mn(2+). H125 serves as the catalytic Proton donor. 2 residues coordinate Mn(2+): H174 and H249.

The protein belongs to the PPP phosphatase family. PP-4 (PP-X) subfamily. Serine/threonine-protein phosphatase 4 (PP4) occurs in different assemblies of the catalytic and one or more regulatory subunits. The cofactor is Mn(2+).

The enzyme catalyses O-phospho-L-seryl-[protein] + H2O = L-seryl-[protein] + phosphate. It catalyses the reaction O-phospho-L-threonyl-[protein] + H2O = L-threonyl-[protein] + phosphate. Functionally, protein phosphatase which seems to be involved in larval development but not essential for embryogenesis. The sequence is that of Serine/threonine-protein phosphatase 4 catalytic subunit 2 from Caenorhabditis elegans.